Here is a 123-residue protein sequence, read N- to C-terminus: Protein HesB, vegetative (123 aa).

This sequence belongs to the HesB/IscA family.

May be required for efficient nitrogen fixation. This is Protein HesB, vegetative (hesB2) from Trichormus variabilis (strain ATCC 29413 / PCC 7937) (Anabaena variabilis).